A 130-amino-acid polypeptide reads, in one-letter code: MSATQNYGTGRRKTATARVFLRPGTGKISINNRELDNFFGRETARMVVRQPLELTETAEKFDIYVTVLGGGVSGQAGAIRHGITRALISYDESLRSPLRKAGFVTRDAREVERKKVGLRKARKRPQYSKR.

The protein belongs to the universal ribosomal protein uS9 family.

This is Small ribosomal subunit protein uS9 from Stutzerimonas stutzeri (strain A1501) (Pseudomonas stutzeri).